The following is a 154-amino-acid chain: Nuclear cap-binding protein subunit 2 (154 aa).

Residues Tyr-10, Tyr-33, 102–106 (RVDWD), 113–117 (RQYGR), and 123–124 (QV) each bind mRNA. Residues 30–108 (CTLYVGNLSF…RLIRVDWDAG (79 aa)) form the RRM domain.

It belongs to the RRM NCBP2 family. As to quaternary structure, component of the nuclear cap-binding complex (CBC), a heterodimer composed of Cbp80 and Cbp20 that interacts with m7GpppG-capped RNA. Interacts with Ars2.

The protein localises to the nucleus. Its function is as follows. Component of the cap-binding complex (CBC), which binds co-transcriptionally to the 5' cap of pre-mRNAs and is involved in various processes such as pre-mRNA splicing and RNA-mediated gene silencing (RNAi). The CBC complex is involved in miRNA-mediated RNA interference via its interaction with Ars2 and is required for primary microRNAs (miRNAs) processing. Also involved in innate immunity via the short interfering RNAs (siRNAs) processing machinery by restricting the viral RNA production. In the CBC complex, Cbp20 recognizes and binds capped RNAs (m7GpppG-capped RNA) but requires Cbp80 to stabilize the movement of its N-terminal loop and lock the CBC into a high affinity cap-binding state with the cap structure. The sequence is that of Nuclear cap-binding protein subunit 2 (Cbp20) from Drosophila erecta (Fruit fly).